A 228-amino-acid polypeptide reads, in one-letter code: L-ribulose-5-phosphate 4-epimerase UlaF (228 aa).

Substrate-binding positions include G26 to N27, S43 to G44, and S72 to S73. Zn(2+)-binding residues include D74, H93, and H95. The active-site Proton donor/acceptor is D118. A Zn(2+)-binding site is contributed by H167. Y225 (proton donor/acceptor) is an active-site residue.

This sequence belongs to the aldolase class II family. AraD/FucA subfamily. Zn(2+) serves as cofactor.

The enzyme catalyses L-ribulose 5-phosphate = D-xylulose 5-phosphate. It functions in the pathway cofactor degradation; L-ascorbate degradation; D-xylulose 5-phosphate from L-ascorbate: step 4/4. Its function is as follows. Catalyzes the isomerization of L-ribulose 5-phosphate to D-xylulose 5-phosphate. Is involved in the anaerobic L-ascorbate utilization. This Escherichia coli (strain SE11) protein is L-ribulose-5-phosphate 4-epimerase UlaF.